The primary structure comprises 145 residues: Plastocyanin, chloroplastic (145 aa).

A chloroplast-targeting transit peptide spans 1–47; the sequence is MKATLRAPASRASAVRPVASLKAAAQRVASVAGVSVASLALTLAAHA. Residues 48–145 enclose the Plastocyanin-like domain; sequence DATVKLGADS…AGMVGKIIVQ (98 aa). Positions 85, 130, 133, and 138 each coordinate Cu cation.

Belongs to the plastocyanin family. It depends on Cu(2+) as a cofactor.

The protein localises to the plastid. It is found in the chloroplast thylakoid membrane. Its function is as follows. Participates in electron transfer between P700 and the cytochrome b6-f complex in photosystem I. The polypeptide is Plastocyanin, chloroplastic (PETE) (Chlamydomonas reinhardtii (Chlamydomonas smithii)).